A 268-amino-acid polypeptide reads, in one-letter code: Tryptophan synthase alpha chain (268 aa).

Catalysis depends on proton acceptor residues E49 and D60.

The protein belongs to the TrpA family. Tetramer of two alpha and two beta chains.

The enzyme catalyses (1S,2R)-1-C-(indol-3-yl)glycerol 3-phosphate + L-serine = D-glyceraldehyde 3-phosphate + L-tryptophan + H2O. Its pathway is amino-acid biosynthesis; L-tryptophan biosynthesis; L-tryptophan from chorismate: step 5/5. Functionally, the alpha subunit is responsible for the aldol cleavage of indoleglycerol phosphate to indole and glyceraldehyde 3-phosphate. The protein is Tryptophan synthase alpha chain of Escherichia coli O81 (strain ED1a).